The sequence spans 331 residues: Spondin-2 (331 aa).

The signal sequence occupies residues 1-26; sequence MENPSPAAALGKALCALLLATLGAAG. One can recognise a Spondin domain in the interval 31–221; the sequence is GESICSARAL…EITSSSPSHP (191 aa). A disulfide bond links Cys35 and Cys171. An a divalent metal cation-binding site is contributed by Glu141. Residues Asp160, Asp188, and Asp192 each coordinate Ca(2+). In terms of domain architecture, TSP type-1 spans 277–331; sequence DCEVSLWSSWGLCGGHCGRLGTKSRTRYVRVQPANNGSPCPELEEEAECVPDNCV. Trp283 carries a C-linked (Man) tryptophan glycan.

In terms of assembly, monomer. Interacts with integrin. As to expression, expressed in normal lung tissue but not in lung carcinoma cell lines.

It is found in the secreted. Its subcellular location is the extracellular space. The protein resides in the extracellular matrix. Cell adhesion protein that promotes adhesion and outgrowth of hippocampal embryonic neurons. Binds directly to bacteria and their components and functions as an opsonin for macrophage phagocytosis of bacteria. Essential in the initiation of the innate immune response and represents a unique pattern-recognition molecule in the ECM for microbial pathogens. Binds bacterial lipopolysaccharide (LPS). This Homo sapiens (Human) protein is Spondin-2 (SPON2).